The sequence spans 871 residues: DNA mismatch repair protein MutS 1 (871 aa).

614–621 (GPNMSGKS) contributes to the ATP binding site.

It belongs to the DNA mismatch repair MutS family.

In terms of biological role, this protein is involved in the repair of mismatches in DNA. It is possible that it carries out the mismatch recognition step. This protein has a weak ATPase activity. The chain is DNA mismatch repair protein MutS 1 from Halobacterium salinarum (strain ATCC 29341 / DSM 671 / R1).